The sequence spans 111 residues: Ribonuclease P protein component (111 aa).

The protein belongs to the RnpA family. As to quaternary structure, consists of a catalytic RNA component (M1 or rnpB) and a protein subunit.

The catalysed reaction is Endonucleolytic cleavage of RNA, removing 5'-extranucleotides from tRNA precursor.. Its function is as follows. RNaseP catalyzes the removal of the 5'-leader sequence from pre-tRNA to produce the mature 5'-terminus. It can also cleave other RNA substrates such as 4.5S RNA. The protein component plays an auxiliary but essential role in vivo by binding to the 5'-leader sequence and broadening the substrate specificity of the ribozyme. This chain is Ribonuclease P protein component, found in Alkaliphilus metalliredigens (strain QYMF).